Consider the following 23-residue polypeptide: Paralytic peptide 1 (23 aa).

The cysteines at positions 7 and 19 are disulfide-linked.

Belongs to the GBP/PSP1/paralytic peptide family. In terms of tissue distribution, hemolymph.

In terms of biological role, causes rapid, rigid paralysis when injected into Lepidopteran larvae. The physiological role may be to reduce hemolymph loss following injury and promote wound healing. The protein is Paralytic peptide 1 of Manduca sexta (Tobacco hawkmoth).